We begin with the raw amino-acid sequence, 482 residues long: tRNA sulfurtransferase (482 aa).

Positions 61-165 (LAIRDALTRI…DDRLLLIKGR (105 aa)) constitute a THUMP domain. Residues 183–184 (LI), Lys-265, Gly-287, and Gln-296 each bind ATP. Cys-344 and Cys-456 form a disulfide bridge. In terms of domain architecture, Rhodanese spans 404–482 (FGANDVILDI…GFANVKVYRP (79 aa)). The Cysteine persulfide intermediate role is filled by Cys-456.

Belongs to the ThiI family.

It localises to the cytoplasm. It carries out the reaction [ThiI sulfur-carrier protein]-S-sulfanyl-L-cysteine + a uridine in tRNA + 2 reduced [2Fe-2S]-[ferredoxin] + ATP + H(+) = [ThiI sulfur-carrier protein]-L-cysteine + a 4-thiouridine in tRNA + 2 oxidized [2Fe-2S]-[ferredoxin] + AMP + diphosphate. It catalyses the reaction [ThiS sulfur-carrier protein]-C-terminal Gly-Gly-AMP + S-sulfanyl-L-cysteinyl-[cysteine desulfurase] + AH2 = [ThiS sulfur-carrier protein]-C-terminal-Gly-aminoethanethioate + L-cysteinyl-[cysteine desulfurase] + A + AMP + 2 H(+). It functions in the pathway cofactor biosynthesis; thiamine diphosphate biosynthesis. Functionally, catalyzes the ATP-dependent transfer of a sulfur to tRNA to produce 4-thiouridine in position 8 of tRNAs, which functions as a near-UV photosensor. Also catalyzes the transfer of sulfur to the sulfur carrier protein ThiS, forming ThiS-thiocarboxylate. This is a step in the synthesis of thiazole, in the thiamine biosynthesis pathway. The sulfur is donated as persulfide by IscS. This chain is tRNA sulfurtransferase, found in Salmonella typhi.